We begin with the raw amino-acid sequence, 254 residues long: PHD finger protein ALFIN-LIKE 8 (254 aa).

The disordered stretch occupies residues 137-194 (GTAKKQSKEKTPKTSGKSNKSGTKPSRQPEPNSRGPKMPPPKDEDDSGGEEEEEEEDH). Over residues 149–162 (KTSGKSNKSGTKPS) the composition is skewed to low complexity. The segment covering 179 to 194 (DEDDSGGEEEEEEEDH) has biased composition (acidic residues). The segment at 196–248 (NTLCGACGDNYGQDEFWICCDACETWFHGKCVKITPAKAEHIKHYKCPNCSSS) adopts a PHD-type zinc-finger fold.

Belongs to the Alfin family. In terms of assembly, interacts with H3K4me3 and to a lesser extent with H3K4me2.

It localises to the nucleus. Histone-binding component that specifically recognizes H3 tails trimethylated on 'Lys-4' (H3K4me3), which mark transcription start sites of virtually all active genes. The sequence is that of PHD finger protein ALFIN-LIKE 8 from Oryza sativa subsp. japonica (Rice).